The sequence spans 528 residues: J domain-containing protein APJ1 (528 aa).

The 70-residue stretch at 4-73 (NTSLYDSLNV…RALYDQYGTT (70 aa)) folds into the J domain. A CR-type zinc finger spans residues 193 to 274 (GKTAKLGLNR…CQGLGFIKER (82 aa)). CXXCXGXG motif repeat units lie at residues 206–213 (CSVCDGHG), 218–225 (CTCKTCKG), 246–253 (CADCGGAG), and 262–269 (CQQCQGLG). Basic and acidic residues predominate over residues 485–499 (NERDSRKRNNRRFDE). The tract at residues 485–528 (NERDSRKRNNRRFDESNINNNNETKRNKYSSPVSGFYDHDINGY) is disordered.

It localises to the cytoplasm. The protein localises to the nucleus. Functionally, putative chaperone involved in protein folding. Interferes with propagation of [PSI+] prion when overproduced. The protein is J domain-containing protein APJ1 (APJ1) of Saccharomyces cerevisiae (strain ATCC 204508 / S288c) (Baker's yeast).